The following is a 72-amino-acid chain: Large ribosomal subunit protein bL31 (72 aa).

Belongs to the bacterial ribosomal protein bL31 family. Type A subfamily. In terms of assembly, part of the 50S ribosomal subunit.

In terms of biological role, binds the 23S rRNA. This chain is Large ribosomal subunit protein bL31, found in Prosthecochloris aestuarii (strain DSM 271 / SK 413).